Consider the following 144-residue polypeptide: Large ribosomal subunit protein uL16 (144 aa).

A compositionally biased stretch (basic residues) spans Met-1 to Gly-19. Positions Met-1–Glu-26 are disordered.

The protein belongs to the universal ribosomal protein uL16 family. As to quaternary structure, part of the 50S ribosomal subunit.

Its function is as follows. Binds 23S rRNA and is also seen to make contacts with the A and possibly P site tRNAs. In Macrococcus caseolyticus (strain JCSC5402) (Macrococcoides caseolyticum), this protein is Large ribosomal subunit protein uL16.